The following is a 130-amino-acid chain: Small ribosomal subunit protein uS9 (130 aa).

The tract at residues 98–130 (LKRAGFLTRDARKKERKKYGQPGARKRFQYSKR) is disordered. Over residues 111–130 (KERKKYGQPGARKRFQYSKR) the composition is skewed to basic residues.

The protein belongs to the universal ribosomal protein uS9 family.

This is Small ribosomal subunit protein uS9 from Sorangium cellulosum (strain So ce56) (Polyangium cellulosum (strain So ce56)).